Here is a 194-residue protein sequence, read N- to C-terminus: Ras-like protein RAS1 (194 aa).

16-23 (GAGGVGKS) lines the GTP pocket. The Effector region signature appears at 38–46 (YDPTIEDSY). GTP is bound by residues 63–67 (DTAGQ) and 122–125 (NKVD). Cysteine methyl ester is present on cysteine 191. Cysteine 191 carries S-geranylgeranyl cysteine lipidation. The propeptide at 192 to 194 (TLL) is removed in mature form.

The protein belongs to the small GTPase superfamily. Ras family.

The protein resides in the cell membrane. The enzyme catalyses GTP + H2O = GDP + phosphate + H(+). With respect to regulation, alternates between an inactive form bound to GDP and an active form bound to GTP. Activated by a guanine nucleotide-exchange factor (GEF) and inactivated by a GTPase-activating protein (GAP). Ras proteins bind GDP/GTP and possess intrinsic GTPase activity. This Hydra vulgaris (Hydra) protein is Ras-like protein RAS1 (RAS1).